Consider the following 337-residue polypeptide: D-alanine--D-alanine ligase (337 aa).

Residues 124–330 form the ATP-grasp domain; sequence KMWFSALGIP…FTEYLSLVIN (207 aa). An ATP-binding site is contributed by 154 to 209; sequence ALAQWGSIFVKAASQGSSVGCYKVDDSAKVAGVLKDAFGYAPYVIVEKTIKARELE. Mg(2+) is bound by residues Asp284, Glu297, and Asn299.

It belongs to the D-alanine--D-alanine ligase family. It depends on Mg(2+) as a cofactor. Mn(2+) serves as cofactor.

It is found in the cytoplasm. It catalyses the reaction 2 D-alanine + ATP = D-alanyl-D-alanine + ADP + phosphate + H(+). It participates in cell wall biogenesis; peptidoglycan biosynthesis. In terms of biological role, cell wall formation. This is D-alanine--D-alanine ligase from Shewanella baltica (strain OS223).